A 159-amino-acid polypeptide reads, in one-letter code: Transcriptional repressor NrdR (159 aa).

Residues 3–34 (CPFCRHDDTQVVDSRVSEDGAAIRRRRRCSAC) fold into a zinc finger. Residues 49-139 (PAVVKKDGSR…VYRRFEDVSE (91 aa)) form the ATP-cone domain.

It belongs to the NrdR family. Zn(2+) is required as a cofactor.

Negatively regulates transcription of bacterial ribonucleotide reductase nrd genes and operons by binding to NrdR-boxes. The sequence is that of Transcriptional repressor NrdR from Burkholderia cenocepacia (strain HI2424).